The sequence spans 460 residues: tRNA hydroxylation protein P (460 aa).

The protein belongs to the peptidase U32 family.

Functionally, involved in prephenate-dependent formation of 5-hydroxyuridine (ho5U) modification at position 34 in tRNAs, the first step in 5-carboxymethoxyuridine (cmo5U) biosynthesis. This chain is tRNA hydroxylation protein P, found in Haemophilus influenzae (strain ATCC 51907 / DSM 11121 / KW20 / Rd).